The primary structure comprises 300 residues: Tyrosine recombinase XerC (300 aa).

The Core-binding (CB) domain occupies 2 to 88 (IQEGKLEQQF…SLRSFYTFLL (87 aa)). Positions 109–294 (RLPKFFYSEE…TKEHLKSTYM (186 aa)) constitute a Tyr recombinase domain. Catalysis depends on residues arginine 150, lysine 174, histidine 246, arginine 249, and histidine 272. Tyrosine 281 (O-(3'-phospho-DNA)-tyrosine intermediate) is an active-site residue.

This sequence belongs to the 'phage' integrase family. XerC subfamily. In terms of assembly, forms a cyclic heterotetrameric complex composed of two molecules of XerC and two molecules of XerD.

Its subcellular location is the cytoplasm. Its function is as follows. Site-specific tyrosine recombinase, which acts by catalyzing the cutting and rejoining of the recombining DNA molecules. The XerC-XerD complex is essential to convert dimers of the bacterial chromosome into monomers to permit their segregation at cell division. It also contributes to the segregational stability of plasmids. The chain is Tyrosine recombinase XerC from Listeria monocytogenes serovar 1/2a (strain ATCC BAA-679 / EGD-e).